A 1279-amino-acid chain; its full sequence is Botulinum-like toxin eBoNT/J (1279 aa).

H225 serves as a coordination point for Zn(2+). E226 is a catalytic residue. Residues H229 and E269 each contribute to the Zn(2+) site. Cysteines 424 and 438 form a disulfide. The interval 435–843 is translocation domain (TD); sequence LSSCIEILED…RLTSLPVFNL (409 aa). A belt; not required for channel formation region spans residues 476-525; sequence ADTILDSTLSNYDFSKEINFTSTVPIITVEDPLETDEDVPVISEDRTVYV. Residues 860–1080 are N-terminus of receptor binding domain (N-RBD); that stretch reads IDIQDSEVLN…EVNRLYWKYF (221 aa). A C-terminus of receptor binding domain (C-RBD) region spans residues 1081 to 1279; that stretch reads EGSYLRDVWG…IPVDEGWKED (199 aa). The Host ganglioside-binding motif motif lies at 1250-1253; that stretch reads SAWY.

It belongs to the peptidase M27 family. In terms of assembly, might be a disulfide-linked heterodimer of a light chain (LC) and heavy chain (HC). Requires Zn(2+) as cofactor.

The protein localises to the secreted. The protein resides in the host cytoplasm. Its subcellular location is the host cytosol. It localises to the host cell membrane. It is found in the host cytoplasmic vesicle membrane. It catalyses the reaction Limited hydrolysis of proteins of the neuroexocytosis apparatus, synaptobrevins, SNAP25 or syntaxin. No detected action on small molecule substrates.. Its function is as follows. Strongly resembles a botulinum-type toxin, with the appropriate domains and residues to have proteolytic function, although its C-terminus (which binds to a eukaryotic host cell) is different enough from clostrial botulinum toxins that it might bind another cell target. Might be a precursor of a toxin that binds to an unknown eukaryotic cell receptor(s), and be taken up into the host cell via the endocytic pathway. When the pH of the putative toxin-containing endosome drops a structural rearrangement occurs so that the N-terminus of the heavy chain forms pores that allows the light chain to translocate into the cytosol. Once in the cytosol the disulfide bond linking the 2 subunits is reduced and light chain cleaves its target protein. The protein is Botulinum-like toxin eBoNT/J of Enterococcus sp. (strain 3G1_DIV0629).